A 220-amino-acid chain; its full sequence is 7-cyano-7-deazaguanine synthase (220 aa).

Position 7–17 (7–17) interacts with ATP; that stretch reads LSGGMDSSITA. Zn(2+) is bound by residues Cys-185, Cys-193, Cys-196, and Cys-199.

Belongs to the QueC family. Requires Zn(2+) as cofactor.

It carries out the reaction 7-carboxy-7-deazaguanine + NH4(+) + ATP = 7-cyano-7-deazaguanine + ADP + phosphate + H2O + H(+). Its pathway is purine metabolism; 7-cyano-7-deazaguanine biosynthesis. Catalyzes the ATP-dependent conversion of 7-carboxy-7-deazaguanine (CDG) to 7-cyano-7-deazaguanine (preQ(0)). The chain is 7-cyano-7-deazaguanine synthase from Nitratiruptor sp. (strain SB155-2).